The chain runs to 107 residues: Integration host factor subunit beta (107 aa).

A compositionally biased stretch (basic and acidic residues) spans 82-101 (PGKELRERVDRRAGEPLKAE). The interval 82–107 (PGKELRERVDRRAGEPLKAEEPDDDL) is disordered.

This sequence belongs to the bacterial histone-like protein family. As to quaternary structure, heterodimer of an alpha and a beta chain.

Its function is as follows. This protein is one of the two subunits of integration host factor, a specific DNA-binding protein that functions in genetic recombination as well as in transcriptional and translational control. This Paraburkholderia phytofirmans (strain DSM 17436 / LMG 22146 / PsJN) (Burkholderia phytofirmans) protein is Integration host factor subunit beta.